The primary structure comprises 325 residues: NADH-quinone oxidoreductase subunit H (325 aa).

8 helical membrane passes run 11-31 (VIIAVVKALVILFVVVGCGAF), 81-101 (VIFTLAPMIAFTSLLLAMAIV), 114-134 (IGLLFFLMMAGLAVYAVLFAG), 154-174 (LSYEVFLGLSLMGVVAQAGSF), 186-206 (LWNVIPQFLGFLTFCIAGVAV), 237-257 (FFVGEYVGIVTVSALIVTLFF), 265-285 (LPPVIWFALKTAFFMMMFILI), and 304-324 (VCLPLTLLNLLATAAVILYTA).

It belongs to the complex I subunit 1 family. As to quaternary structure, NDH-1 is composed of 13 different subunits. Subunits NuoA, H, J, K, L, M, N constitute the membrane sector of the complex.

The protein localises to the cell inner membrane. It carries out the reaction a quinone + NADH + 5 H(+)(in) = a quinol + NAD(+) + 4 H(+)(out). Functionally, NDH-1 shuttles electrons from NADH, via FMN and iron-sulfur (Fe-S) centers, to quinones in the respiratory chain. The immediate electron acceptor for the enzyme in this species is believed to be ubiquinone. Couples the redox reaction to proton translocation (for every two electrons transferred, four hydrogen ions are translocated across the cytoplasmic membrane), and thus conserves the redox energy in a proton gradient. This subunit may bind ubiquinone. The protein is NADH-quinone oxidoreductase subunit H of Erwinia tasmaniensis (strain DSM 17950 / CFBP 7177 / CIP 109463 / NCPPB 4357 / Et1/99).